The following is a 102-amino-acid chain: Small ribosomal subunit protein uS10 (102 aa).

The protein belongs to the universal ribosomal protein uS10 family. As to quaternary structure, part of the 30S ribosomal subunit.

Involved in the binding of tRNA to the ribosomes. This is Small ribosomal subunit protein uS10 from Frankia alni (strain DSM 45986 / CECT 9034 / ACN14a).